The following is an 89-amino-acid chain: Protein S100-A8 (89 aa).

Ala-2 carries the post-translational modification N-acetylalanine. 2 consecutive EF-hand domains span residues 13 to 48 (IEVY…FVQN) and 46 to 81 (VQNK…VGVA). His-17 and His-27 together coordinate Zn(2+). Residue Asp-33 coordinates Ca(2+). An S-nitrosocysteine modification is found at Cys-42. The Ca(2+) site is built by Asp-59, Asn-61, Asp-63, and Glu-70. His-83 contributes to the Zn(2+) binding site.

This sequence belongs to the S-100 family. As to quaternary structure, homodimer. Preferentially exists as a heterodimer or heterotetramer with S100A9 known as calprotectin (S100A8/A9). S100A8 interacts with AGER, ATP2A2 and with the heterodimeric complex formed by TLR4 and LY96. Calprotectin (S100A8/9) interacts with CEACAM3 and tubulin filaments in a calcium-dependent manner. Heterotetrameric calprotectin (S100A8/A9) interacts with ANXA6 and associates with tubulin filaments in activated monocytes. S100A8 and calprotectin (S100A8/9) interact with NCF2/P67PHOX, RAC1 and RAC2. Calprotectin (S100A8/9) interacts with CYBA and CYBB. Calprotectin (S100A8/9) interacts with NOS2 to form the iNOS-S100A8/A9 transnitrosylase complex. Calprotectin (S100A8/9) interacts with CD69.

The protein resides in the secreted. The protein localises to the cytoplasm. It is found in the cytoskeleton. It localises to the cell membrane. Functionally, S100A8 is a calcium- and zinc-binding protein which plays a prominent role in the regulation of inflammatory processes and immune response. It can induce neutrophil chemotaxis and adhesion. Predominantly found as calprotectin (S100A8/A9) which has a wide plethora of intra- and extracellular functions. The intracellular functions include: facilitating leukocyte arachidonic acid trafficking and metabolism, modulation of the tubulin-dependent cytoskeleton during migration of phagocytes and activation of the neutrophilic NADPH-oxidase. Also participates in regulatory T-cell differentiation together with CD69. Activates NADPH-oxidase by facilitating the enzyme complex assembly at the cell membrane, transferring arachidonic acid, an essential cofactor, to the enzyme complex and S100A8 contributes to the enzyme assembly by directly binding to NCF2/P67PHOX. The extracellular functions involve pro-inflammatory, antimicrobial, oxidant-scavenging and apoptosis-inducing activities. Its pro-inflammatory activity includes recruitment of leukocytes, promotion of cytokine and chemokine production, and regulation of leukocyte adhesion and migration. Acts as an alarmin or a danger associated molecular pattern (DAMP) molecule and stimulates innate immune cells via binding to pattern recognition receptors such as Toll-like receptor 4 (TLR4) and receptor for advanced glycation endproducts (AGER). Binding to TLR4 and AGER activates the MAP-kinase and NF-kappa-B signaling pathways resulting in the amplification of the pro-inflammatory cascade. Has antimicrobial activity towards bacteria and fungi and exerts its antimicrobial activity probably via chelation of Zn(2+) which is essential for microbial growth. Can induce cell death via autophagy and apoptosis and this occurs through the cross-talk of mitochondria and lysosomes via reactive oxygen species (ROS) and the process involves BNIP3. Can regulate neutrophil number and apoptosis by an anti-apoptotic effect; regulates cell survival via ITGAM/ITGB and TLR4 and a signaling mechanism involving MEK-ERK. Its role as an oxidant scavenger has a protective role in preventing exaggerated tissue damage by scavenging oxidants. The iNOS-S100A8/A9 transnitrosylase complex is proposed to direct selective inflammatory stimulus-dependent S-nitrosylation of multiple targets such as GAPDH, ANXA5, EZR, MSN and VIM by recognizing a [IL]-x-C-x-x-[DE] motif; S100A8 seems to contribute to S-nitrosylation site selectivity. The protein is Protein S100-A8 (S100a8) of Rattus norvegicus (Rat).